The chain runs to 518 residues: Glutamate--cysteine ligase (518 aa).

This sequence belongs to the glutamate--cysteine ligase type 1 family. Type 1 subfamily.

It catalyses the reaction L-cysteine + L-glutamate + ATP = gamma-L-glutamyl-L-cysteine + ADP + phosphate + H(+). It participates in sulfur metabolism; glutathione biosynthesis; glutathione from L-cysteine and L-glutamate: step 1/2. The chain is Glutamate--cysteine ligase from Salmonella typhi.